Here is a 265-residue protein sequence, read N- to C-terminus: Probable S-methyl-5'-thioinosine phosphorylase (265 aa).

Residues Ser15 and 55 to 56 (RH) contribute to the phosphate site. Met187 contacts substrate. A phosphate-binding site is contributed by Thr188. 211 to 213 (NYA) contributes to the substrate binding site.

It belongs to the PNP/MTAP phosphorylase family. MTAP subfamily. As to quaternary structure, homotrimer.

The catalysed reaction is S-methyl-5'-thioinosine + phosphate = 5-(methylsulfanyl)-alpha-D-ribose 1-phosphate + hypoxanthine. Its pathway is purine metabolism; purine nucleoside salvage. In terms of biological role, catalyzes the reversible phosphorylation of S-methyl-5'-thioinosine (MTI) to hypoxanthine and 5-methylthioribose-1-phosphate. Involved in the breakdown of S-methyl-5'-thioadenosine (MTA), a major by-product of polyamine biosynthesis. Catabolism of (MTA) occurs via deamination to MTI and phosphorolysis to hypoxanthine. In Thermodesulfovibrio yellowstonii (strain ATCC 51303 / DSM 11347 / YP87), this protein is Probable S-methyl-5'-thioinosine phosphorylase.